Reading from the N-terminus, the 243-residue chain is 1-(5-phosphoribosyl)-5-[(5-phosphoribosylamino)methylideneamino] imidazole-4-carboxamide isomerase (243 aa).

Asp-8 acts as the Proton acceptor in catalysis. Asp-129 serves as the catalytic Proton donor.

This sequence belongs to the HisA/HisF family.

It localises to the cytoplasm. It carries out the reaction 1-(5-phospho-beta-D-ribosyl)-5-[(5-phospho-beta-D-ribosylamino)methylideneamino]imidazole-4-carboxamide = 5-[(5-phospho-1-deoxy-D-ribulos-1-ylimino)methylamino]-1-(5-phospho-beta-D-ribosyl)imidazole-4-carboxamide. It functions in the pathway amino-acid biosynthesis; L-histidine biosynthesis; L-histidine from 5-phospho-alpha-D-ribose 1-diphosphate: step 4/9. This is 1-(5-phosphoribosyl)-5-[(5-phosphoribosylamino)methylideneamino] imidazole-4-carboxamide isomerase from Nitratidesulfovibrio vulgaris (strain DSM 19637 / Miyazaki F) (Desulfovibrio vulgaris).